The primary structure comprises 218 residues: Probable transaldolase (218 aa).

Lys-83 acts as the Schiff-base intermediate with substrate in catalysis.

Belongs to the transaldolase family. Type 3B subfamily.

The protein localises to the cytoplasm. The catalysed reaction is D-sedoheptulose 7-phosphate + D-glyceraldehyde 3-phosphate = D-erythrose 4-phosphate + beta-D-fructose 6-phosphate. Its pathway is carbohydrate degradation; pentose phosphate pathway; D-glyceraldehyde 3-phosphate and beta-D-fructose 6-phosphate from D-ribose 5-phosphate and D-xylulose 5-phosphate (non-oxidative stage): step 2/3. In terms of biological role, transaldolase is important for the balance of metabolites in the pentose-phosphate pathway. This Mesorhizobium japonicum (strain LMG 29417 / CECT 9101 / MAFF 303099) (Mesorhizobium loti (strain MAFF 303099)) protein is Probable transaldolase (tal).